The primary structure comprises 118 residues: MRNWRWLLLVLAALLSWLQHRFWFGPGNSGEVRMLQVQIVQQHQENERLRQRNASLAAEVKNLKDGDAAIEERARSELGMIKPGEIFYRVVEDIPTPLPNDTSADHGVDLAQPRREKR.

The Cytoplasmic portion of the chain corresponds to 1–6 (MRNWRW). The chain crosses the membrane as a helical span at residues 7-24 (LLLVLAALLSWLQHRFWF). Residues 25–118 (GPGNSGEVRM…DLAQPRREKR (94 aa)) are Periplasmic-facing. Residues 30 to 66 (GEVRMLQVQIVQQHQENERLRQRNASLAAEVKNLKDG) adopt a coiled-coil conformation. The disordered stretch occupies residues 97–118 (PLPNDTSADHGVDLAQPRREKR). A compositionally biased stretch (basic and acidic residues) spans 103–118 (SADHGVDLAQPRREKR).

This sequence belongs to the FtsB family. As to quaternary structure, part of a complex composed of FtsB, FtsL and FtsQ.

The protein resides in the cell inner membrane. Essential cell division protein. May link together the upstream cell division proteins, which are predominantly cytoplasmic, with the downstream cell division proteins, which are predominantly periplasmic. This Xylella fastidiosa (strain 9a5c) protein is Cell division protein FtsB.